The sequence spans 842 residues: Glycogen phosphorylase, muscle form (842 aa).

At Ser-2 the chain carries N-acetylserine. At Ser-15 the chain carries Phosphoserine; by PHK; in form phosphorylase A. AMP-binding residues include Asp-43 and Tyr-76. Tyr-204 and Tyr-227 each carry phosphotyrosine. 310 to 319 (RRFKSSKFGC) contributes to the AMP binding site. Ser-430 is subject to Phosphoserine. Position 473 is a phosphotyrosine (Tyr-473). Phosphoserine is present on Ser-514. Lys-681 is subject to N6-(pyridoxal phosphate)lysine. Phosphoserine is present on residues Ser-747 and Ser-748.

Belongs to the glycogen phosphorylase family. As to quaternary structure, homodimer. Homotetramer; to form the enzymatically active phosphorylase A. Pyridoxal 5'-phosphate serves as cofactor. Post-translationally, phosphorylation of Ser-15 converts phosphorylase B (unphosphorylated) to phosphorylase A.

The enzyme catalyses [(1-&gt;4)-alpha-D-glucosyl](n) + phosphate = [(1-&gt;4)-alpha-D-glucosyl](n-1) + alpha-D-glucose 1-phosphate. Allosterically regulated through the non-covalent binding of metabolites, being activated by AMP and inhibited by ATP, ADP, and glucose-6-phosphate. The activity is also controlled by post-translational modifications including phosphorylation. Functionally, allosteric enzyme that catalyzes the rate-limiting step in glycogen catabolism, the phosphorolytic cleavage of glycogen to produce glucose-1-phosphate, and plays a central role in maintaining cellular and organismal glucose homeostasis. This chain is Glycogen phosphorylase, muscle form, found in Macaca fascicularis (Crab-eating macaque).